The sequence spans 312 residues: Aspartate carbamoyltransferase catalytic subunit (312 aa).

Residues Arg58 and Thr59 each coordinate carbamoyl phosphate. An L-aspartate-binding site is contributed by Lys86. The carbamoyl phosphate site is built by Arg108, His136, and Gln139. 2 residues coordinate L-aspartate: Arg169 and Arg223. Residues Gly264 and Pro265 each contribute to the carbamoyl phosphate site.

The protein belongs to the aspartate/ornithine carbamoyltransferase superfamily. ATCase family. Heterododecamer (2C3:3R2) of six catalytic PyrB chains organized as two trimers (C3), and six regulatory PyrI chains organized as three dimers (R2).

It catalyses the reaction carbamoyl phosphate + L-aspartate = N-carbamoyl-L-aspartate + phosphate + H(+). Its pathway is pyrimidine metabolism; UMP biosynthesis via de novo pathway; (S)-dihydroorotate from bicarbonate: step 2/3. Functionally, catalyzes the condensation of carbamoyl phosphate and aspartate to form carbamoyl aspartate and inorganic phosphate, the committed step in the de novo pyrimidine nucleotide biosynthesis pathway. This is Aspartate carbamoyltransferase catalytic subunit from Syntrophomonas wolfei subsp. wolfei (strain DSM 2245B / Goettingen).